The primary structure comprises 383 residues: MSETVVCTSRATVMLYDDSNKRWLPAGTGPQAFSRVQIYHNPTANSFRVVGRKMQPDQQVVINCAIVRGVKYNQATPNFHQWRDARQVWGLNFGSKEDATQFANGMASALEALEGGGPLPPPPPTAPPTWSAQNGPSPEEMEQQKRQQQSELMERERRASNAGGPPAASAGAPPPPPGPPPPPGPPPPPGLSSSGVSAATQGAGGGPPPAPPLPTAQGPSGGGTGAPSLASAIAGAKLRKVSKQEEASAGPVAPKAESSRSTGGGLMEEMNAMLARRRKATQVGEKPAKDESANQEESDARVPAHSESVRRPWEKNSTTLPRMKSSSSVTTSEAHPATPSSSDESDLERVKQELLEEVRKELQKVKEEIIEAFVQELRKRGAP.

At Ser2 the chain carries N-acetylserine. One can recognise a WH1 domain in the interval 2 to 113; that stretch reads SETVVCTSRA…NGMASALEAL (112 aa). Position 39 is a phosphotyrosine (Tyr39). Ser46 is subject to Phosphoserine. The interval 112–349 is disordered; that stretch reads ALEGGGPLPP…SSSDESDLER (238 aa). Positions 118–127 are enriched in pro residues; that stretch reads PLPPPPPTAP. The residue at position 160 (Ser160) is a Phosphoserine; by PKA, PKG/PRKG1, PKC and ROCK1. The segment covering 162–171 has biased composition (low complexity); it reads AGGPPAASAG. Over residues 172–190 the composition is skewed to pro residues; that stretch reads APPPPPGPPPPPGPPPPPG. A compositionally biased stretch (low complexity) spans 191–201; sequence LSSSGVSAATQ. The EVH2 block A stretch occupies residues 228–248; sequence SLASAIAGAKLRKVSKQEEAS. The segment at 228-380 is EVH2; sequence SLASAIAGAK…EAFVQELRKR (153 aa). A KLKR motif is present at residues 237–240; that stretch reads KLRK. At Ser242 the chain carries Phosphoserine; by PKA and PKG/PRKG1. Positions 262-281 are EVH2 block B; it reads TGGGLMEEMNAMLARRRKAT. Position 281 is a phosphothreonine; by PKA, PKG/PRKG1 and AMPK (Thr281). The residue at position 286 (Lys286) is an N6-acetyllysine. Residues 286-314 show a composition bias toward basic and acidic residues; the sequence is KPAKDESANQEESDARVPAHSESVRRPWE. A phosphoserine mark is found at Ser308 and Ser317. Positions 315–342 are enriched in polar residues; the sequence is KNSTTLPRMKSSSSVTTSEAHPATPSSS. Phosphothreonine is present on Thr319. Ser325 bears the Phosphoserine; by AMPK mark. Phosphoserine occurs at positions 326 and 328. Positions 343–376 form a coiled coil; that stretch reads DESDLERVKQELLEEVRKELQKVKEEIIEAFVQE. Positions 346 to 380 are EVH2 block C; sequence DLERVKQELLEEVRKELQKVKEEIIEAFVQELRKR. Repeat copies occupy residues 347 to 361 and 362 to 376. The 2 X 15 AA tandem repeats of L-[EQ]-[KR] [MV]-K-[EQ]-E-[IL]-[IL]-E-[AEV]-[FV]-[KRV]-[KQ]-E stretch occupies residues 347–361; sequence LERVKQELLEEVRKE.

Belongs to the Ena/VASP family. As to quaternary structure, homotetramer. Interacts with PFN1, PFN2, LPP, ACTN1 and ACTG1. Interacts, via the EVH1 domain, with the Pro-rich regions of ZYX. This interaction is important for targeting to focal adhesions and the formation of actin-rich structures at the apical surface of cells. Interacts, via the EVH1 domain, with the Pro-rich domain of Listeria monocytogenes actA. Interacts with APBB1IP. Interacts, via the Pro-rich domain, with the C-terminal SH3 domain of DNMBP. Interacts weakly with MEFV. Major substrate for cAMP-dependent (PKA) and cGMP-dependent protein kinase (PKG) in platelets. The preferred site for PKA is Ser-160, the preferred site for PKG/PRKG1, Ser-242. In ADP-activated platelets, phosphorylation by PKA or PKG on Ser-160 leads to fibrinogen receptor inhibition. Phosphorylation on Thr-281 requires prior phosphorylation on Ser-160 and Ser-242. In response to phorbol ester (PMA) stimulation, phosphorylated by PKC/PRKCA. In response to thrombin, phosphorylated by both PKC and ROCK1. Phosphorylation at Thr-281 by AMPK does not require prior phosphorylation at Ser-160 or Ser-242. Phosphorylation at Ser-160 by PKA is required for localization to the tight junctions in epithelial cells. Phosphorylation modulates F-actin binding, actin filament elongation and platelet activation. Phosphorylation at Ser-325 by AMPK also alters actin filament binding. Carbon monoxide (CO) promotes phosphorylation at Ser-160, while nitric oxide (NO) promotes phosphorylation at Ser-160, but also at Ser-242.

The protein resides in the cytoplasm. Its subcellular location is the cytoskeleton. It is found in the cell junction. The protein localises to the focal adhesion. It localises to the tight junction. The protein resides in the cell projection. Its subcellular location is the lamellipodium membrane. It is found in the filopodium membrane. Functionally, ena/VASP proteins are actin-associated proteins involved in a range of processes dependent on cytoskeleton remodeling and cell polarity such as axon guidance, lamellipodial and filopodial dynamics, platelet activation and cell migration. VASP promotes actin filament elongation. It protects the barbed end of growing actin filaments against capping and increases the rate of actin polymerization in the presence of capping protein. VASP stimulates actin filament elongation by promoting the transfer of profilin-bound actin monomers onto the barbed end of growing actin filaments. Plays a role in actin-based mobility of Listeria monocytogenes in host cells. Regulates actin dynamics in platelets and plays an important role in regulating platelet aggregation. The chain is Vasodilator-stimulated phosphoprotein (VASP) from Bos taurus (Bovine).